A 177-amino-acid polypeptide reads, in one-letter code: Parathyroid hormone-related protein (177 aa).

A signal peptide spans Met1–Gly24. Residues Arg25–Leu34 constitute a propeptide that is removed on maturation. The segment at Arg57–His68 is important for receptor binding. The tract at residues Ala74–His177 is disordered. A compositionally biased stretch (polar residues) spans Ser76–Asn90. A Nuclear localization signal motif is present at residues Thr108–Lys129. Residues Asn109 to Pro118 show a composition bias toward basic and acidic residues. Residues Pro122–Lys132 are compositionally biased toward basic residues. Low complexity predominate over residues Pro161–His177.

Belongs to the parathyroid hormone family. PTHrP interacts with PTH1R (via N-terminal extracellular domain). In terms of processing, there are several secretory forms, including osteostatin, arising from endoproteolytic cleavage of the initial translation product. Each of these secretory forms is believed to have one or more of its own receptors that mediates the normal paracrine, autocrine and endocrine actions.

Its subcellular location is the secreted. The protein resides in the cytoplasm. It localises to the nucleus. In terms of biological role, neuroendocrine peptide which is a critical regulator of cellular and organ growth, development, migration, differentiation and survival and of epithelial calcium ion transport. Acts by binding to its receptor, PTH1R, activating G protein-coupled receptor signaling. Regulates endochondral bone development and epithelial-mesenchymal interactions during the formation of the mammary glands and teeth. Required for skeletal homeostasis. Promotes mammary mesenchyme differentiation and bud outgrowth by modulating mesenchymal cell responsiveness to BMPs. Up-regulates BMPR1A expression in the mammary mesenchyme and this increases the sensitivity of these cells to BMPs and allows them to respond to BMP4 in a paracrine and/or autocrine fashion. BMP4 signaling in the mesenchyme, in turn, triggers epithelial outgrowth and augments MSX2 expression, which causes the mammary mesenchyme to inhibit hair follicle formation within the nipple sheath. Functionally, potent inhibitor of osteoclastic bone resorption. This chain is Parathyroid hormone-related protein (Pthlh), found in Rattus norvegicus (Rat).